The sequence spans 773 residues: Histone-lysine N-methyltransferase mes-2 (773 aa).

Positions 1 to 13 (MSNSEPSTSTPSG) are enriched in polar residues. The tract at residues 1 to 33 (MSNSEPSTSTPSGKTKKRGKKCETSMGKSKKSK) is disordered. The interval 1–194 (MSNSEPSTST…TPDQLRLTHM (194 aa)) is interaction with mes-6. A CXC domain is found at 505 to 614 (IREDDMRDSQ…SNIIKCRNFG (110 aa)). In terms of domain architecture, SET spans 616-737 (TRMIQKRTYC…ISEELTFDYS (122 aa)). Residues 749–773 (VQTKERSEKPSRPKSQKLSKPMTSE) form a disordered region. Over residues 750–759 (QTKERSEKPS) the composition is skewed to basic and acidic residues.

This sequence belongs to the class V-like SAM-binding methyltransferase superfamily. Histone-lysine methyltransferase family. EZ subfamily. As to quaternary structure, interacts directly with mes-6 via its N-terminal domain. Forms a heterotrimeric complex with mes-3 and mes-6. Does not interact with mes-4. In adults, it is predominantly expressed in the germline, and weakly expressed in intestinal cells. Expressed in the hypoderm.

It localises to the nucleus. It carries out the reaction L-lysyl(27)-[histone H3] + 3 S-adenosyl-L-methionine = N(6),N(6),N(6)-trimethyl-L-lysyl(27)-[histone H3] + 3 S-adenosyl-L-homocysteine + 3 H(+). In terms of biological role, polycomb group (PcG) protein. Catalytic subunit of a the mes-2/mes-3/mes-6 complex, which methylates 'Lys-27' of histone H3, leading to transcriptional repression of the affected target genes. PcG proteins act by forming multiprotein complexes, which are required to maintain the transcriptionally repressive state of homeotic genes throughout development. In association with the nfya-1-NF-Y complex, may play a role in repressing the expression of the homeobox protein egl-5 in tissues such as the head. PcG proteins are not required to initiate repression, but to maintain it during later stages of development. The mes-2/mes-3/mes-6 complex may participate in the global inactivation of the X chromosomes in germline cells. This complex is required to exclude mes-4 from the inactivated X-chromosomes in germline cells. Required for small-RNA-induced H3K27 trimethylation. Involved in the negative regulation of lifespan in a germline-independent fashion. In Caenorhabditis elegans, this protein is Histone-lysine N-methyltransferase mes-2.